The primary structure comprises 569 residues: 3-(3-hydroxy-phenyl)propionate/3-hydroxycinnamic acid hydroxylase (569 aa).

FAD-binding positions include 8 to 37 (DVVI…VVDE) and 273 to 283 (FREGRLMLAGD).

It belongs to the PheA/TfdB FAD monooxygenase family. It depends on FAD as a cofactor.

The catalysed reaction is 3-(3-hydroxyphenyl)propanoate + NADH + O2 + H(+) = 3-(2,3-dihydroxyphenyl)propanoate + NAD(+) + H2O. It carries out the reaction (2E)-3-(3-hydroxyphenyl)prop-2-enoate + NADH + O2 + H(+) = (2E)-3-(2,3-dihydroxyphenyl)prop-2-enoate + NAD(+) + H2O. It functions in the pathway aromatic compound metabolism; 3-phenylpropanoate degradation. In terms of biological role, catalyzes the insertion of one atom of molecular oxygen into position 2 of the phenyl ring of 3-(3-hydroxyphenyl)propionate (3-HPP) and hydroxycinnamic acid (3HCI). This is 3-(3-hydroxy-phenyl)propionate/3-hydroxycinnamic acid hydroxylase from Mycolicibacterium gilvum (strain PYR-GCK) (Mycobacterium gilvum (strain PYR-GCK)).